Here is a 450-residue protein sequence, read N- to C-terminus: Trigger factor (450 aa).

In terms of domain architecture, PPIase FKBP-type spans 161-246 (GDRVVIDFKG…VKTVEAPEYP (86 aa)). Positions 422–450 (PMSLQELMSPQQPEAESAEGESKQDETKE) are disordered. The span at 441 to 450 (GESKQDETKE) shows a compositional bias: basic and acidic residues.

The protein belongs to the FKBP-type PPIase family. Tig subfamily.

Its subcellular location is the cytoplasm. It carries out the reaction [protein]-peptidylproline (omega=180) = [protein]-peptidylproline (omega=0). Functionally, involved in protein export. Acts as a chaperone by maintaining the newly synthesized protein in an open conformation. Functions as a peptidyl-prolyl cis-trans isomerase. This is Trigger factor from Alkalilimnicola ehrlichii (strain ATCC BAA-1101 / DSM 17681 / MLHE-1).